Consider the following 767-residue polypeptide: uncharacterized protein (767 aa).

3 disordered regions span residues 171 to 209 (LPVW…LRTP), 314 to 340 (ETEA…CQEE), and 533 to 566 (RDHG…PRGF). 2 stretches are compositionally biased toward basic and acidic residues: residues 322-331 (PDPRPEKDAK) and 552-564 (ETKD…RDPR).

This is an uncharacterized protein from Homo sapiens (Human).